The following is a 298-amino-acid chain: ADP/ATP translocase 3 (298 aa).

Residue methionine 1 is modified to N-acetylmethionine. Residues 1–7 (MTEQAIS) are Mitochondrial intermembrane-facing. At threonine 2 the chain carries N-acetylthreonine; in ADP/ATP translocase 3, N-terminally processed. One copy of the Solcar 1 repeat lies at 6–98 (ISFAKDFLAG…FAFKDKYKQI (93 aa)). A helical transmembrane segment spans residues 8 to 37 (FAKDFLAGGIAAAISKTAVAPIERVKLLLQ). Residues 38-74 (VQHASKQIAADKQYKGIVDCIVRIPKEQGVLSFWRGN) lie on the Mitochondrial matrix side of the membrane. An N6,N6,N6-trimethyllysine modification is found at lysine 52. Residues 75 to 99 (LANVIRYFPTQALNFAFKDKYKQIF) form a helical membrane-spanning segment. ADP is bound by residues arginine 80 and lysine 92. The Mitochondrial intermembrane segment spans residues 100–109 (LGGVDKRTQF). At lysine 105 the chain carries N6-acetyllysine. A helical membrane pass occupies residues 110–130 (WRYFAGNLASGGAAGATSLCF). Solcar repeat units lie at residues 111–201 (RYFA…AKGM) and 212–297 (VSWM…LKKV). Over 131–178 (VYPLDFARTRLAADVGKSGSEREFRGLGDCLVKITKSDGIRGLYQGFN) the chain is Mitochondrial matrix. A helical membrane pass occupies residues 179-199 (VSVQGIIIYRAAYFGIYDTAK). Residues 200-210 (GMLPDPKNTHI) lie on the Mitochondrial intermembrane side of the membrane. A helical membrane pass occupies residues 211-231 (VVSWMIAQTVTAVAGVVSYPF). The Mitochondrial matrix portion of the chain corresponds to 232–273 (DTVRRRMMMQSGRKGADIMYKGTVDCWRKILKDEGGKAFFKG). Arginine 235 contacts ADP. The segment at 235–240 (RRRMMM) is important for transport activity. The Nucleotide carrier signature motif motif lies at 235–240 (RRRMMM). Lysine 268 is modified (N6-acetyllysine). A helical transmembrane segment spans residues 274–291 (AWSNVLRGMGGAFVLVLY). The Mitochondrial intermembrane portion of the chain corresponds to 292 to 298 (DELKKVI).

Belongs to the mitochondrial carrier (TC 2.A.29) family. As to quaternary structure, monomer. Found in a complex with ARL2, ARL2BP and SLC25A6/ANT3. Trimethylated by ANTKMT at Lys-52.

The protein localises to the mitochondrion inner membrane. It localises to the membrane. The catalysed reaction is ADP(in) + ATP(out) = ADP(out) + ATP(in). It carries out the reaction H(+)(in) = H(+)(out). With respect to regulation, the matrix-open state (m-state) is inhibited by the membrane-permeable bongkrekic acid (BKA). The cytoplasmic-open state (c-state) is inhibited by the membrane-impermeable toxic inhibitor carboxyatractyloside (CATR). Proton transporter activity is inhibited by ADP:ATP antiporter activity. ADP:ATP antiporter that mediates import of ADP into the mitochondrial matrix for ATP synthesis, and export of ATP out to fuel the cell. Cycles between the cytoplasmic-open state (c-state) and the matrix-open state (m-state): operates by the alternating access mechanism with a single substrate-binding site intermittently exposed to either the cytosolic (c-state) or matrix (m-state) side of the inner mitochondrial membrane. In addition to its ADP:ATP antiporter activity, also involved in mitochondrial uncoupling and mitochondrial permeability transition pore (mPTP) activity. Plays a role in mitochondrial uncoupling by acting as a proton transporter: proton transport uncouples the proton flows via the electron transport chain and ATP synthase to reduce the efficiency of ATP production and cause mitochondrial thermogenesis. Proton transporter activity is inhibited by ADP:ATP antiporter activity, suggesting that SLC25A6/ANT3 acts as a master regulator of mitochondrial energy output by maintaining a delicate balance between ATP production (ADP:ATP antiporter activity) and thermogenesis (proton transporter activity). Proton transporter activity requires free fatty acids as cofactor, but does not transport it. Also plays a key role in mPTP opening, a non-specific pore that enables free passage of the mitochondrial membranes to solutes of up to 1.5 kDa, and which contributes to cell death. It is however unclear if SLC25A6/ANT3 constitutes a pore-forming component of mPTP or regulates it. The chain is ADP/ATP translocase 3 from Bos taurus (Bovine).